The chain runs to 564 residues: Oxalyl-CoA decarboxylase (564 aa).

Substrate is bound by residues Ile-32 and Tyr-118. 2 residues coordinate ADP: Arg-158 and Lys-220. Residue 261–265 (AAARS) participates in substrate binding. ADP contacts are provided by Arg-280, Asp-302, and Ile-322. Position 355 (Asn-355) interacts with substrate. Residues Tyr-372 and 396 to 398 (ANT) contribute to the thiamine diphosphate site. 403-404 (RN) contributes to the substrate binding site. 421–423 (GVM) contacts thiamine diphosphate. Asp-447 is a binding site for Mg(2+). Residue 448-449 (SA) coordinates thiamine diphosphate. Mg(2+) contacts are provided by Asn-474 and Gly-476. Thiamine diphosphate is bound at residue Tyr-478. 550 to 552 (SGH) lines the substrate pocket.

It belongs to the TPP enzyme family. Homotetramer; dimer of dimers. Mg(2+) is required as a cofactor. It depends on thiamine diphosphate as a cofactor.

It carries out the reaction oxalyl-CoA + H(+) = formyl-CoA + CO2. It participates in metabolic intermediate degradation; oxalate degradation; CO(2) and formate from oxalate: step 2/2. Its function is as follows. Involved in the catabolism of oxalate and in the adapatation to low pH via the induction of the oxalate-dependent acid tolerance response (ATR). Catalyzes the decarboxylation of oxalyl-CoA to yield carbon dioxide and formyl-CoA. The polypeptide is Oxalyl-CoA decarboxylase (oxc) (Escherichia coli O157:H7).